The sequence spans 80 residues: Large ribosomal subunit protein uL24 (80 aa).

The protein belongs to the universal ribosomal protein uL24 family. Part of the 50S ribosomal subunit.

Its function is as follows. One of two assembly initiator proteins, it binds directly to the 5'-end of the 23S rRNA, where it nucleates assembly of the 50S subunit. In terms of biological role, one of the proteins that surrounds the polypeptide exit tunnel on the outside of the subunit. In Chlorobium phaeobacteroides (strain DSM 266 / SMG 266 / 2430), this protein is Large ribosomal subunit protein uL24.